A 352-amino-acid polypeptide reads, in one-letter code: Mitochondrial ubiquitin ligase activator of NFKB 1 (352 aa).

At 1–8 (MESGGRPS) the chain is on the cytoplasmic side. Residues 9–29 (LCQFILLGTTSVVTAALYSVY) form a helical membrane-spanning segment. At 30–238 (RQKARVSQEL…LLQRQESSVR (209 aa)) the chain is on the mitochondrial intermembrane side. A Glycyl lysine isopeptide (Lys-Gly) (interchain with G-Cter in ubiquitin) cross-link involves residue lysine 52. Residues 239 to 259 (LWKVLALVFGFATCATLFFIL) traverse the membrane as a helical segment. The Cytoplasmic segment spans residues 260 to 352 (RKQYLQRQER…ITRVIPLYNS (93 aa)). Glycyl lysine isopeptide (Lys-Gly) (interchain with G-Cter in ubiquitin) cross-links involve residues lysine 273 and lysine 299. The RING-type zinc finger occupies 302 to 340 (CVVCLSSFKSCVFLECGHVCSCTECYRALPEPKKCPICR).

In terms of assembly, homooligomer. Interacts with MAP3K7/TAK1. Interacts with UBC9. Interacts with and sumoylates DNM1L. Interacts with MAVS. Interacts with TP53 (via N-terminus); the interaction leads to ubiquitination and proteasomal degradation of TP53. Ubiquitinated by PRKN during mitophagy, leading to its degradation and enhancement of mitophagy. Deubiquitinated by USP30. As to expression, widely expressed with highest levels in the heart, skeletal muscle, placenta, kidney and liver. Barely detectable in colon and thymus.

The protein resides in the mitochondrion outer membrane. Its subcellular location is the peroxisome. The enzyme catalyses S-ubiquitinyl-[E2 ubiquitin-conjugating enzyme]-L-cysteine + [acceptor protein]-L-lysine = [E2 ubiquitin-conjugating enzyme]-L-cysteine + N(6)-ubiquitinyl-[acceptor protein]-L-lysine.. It participates in protein modification; protein ubiquitination. Its pathway is protein modification; protein sumoylation. Exhibits weak E3 ubiquitin-protein ligase activity. E3 ubiquitin ligases accept ubiquitin from an E2 ubiquitin-conjugating enzyme in the form of a thioester and then directly transfer the ubiquitin to targeted substrates. Can ubiquitinate AKT1 preferentially at 'Lys-284' involving 'Lys-48'-linked polyubiquitination and seems to be involved in regulation of Akt signaling by targeting phosphorylated Akt to proteasomal degradation. Mediates polyubiquitination of cytoplasmic TP53 at 'Lys-24' which targets TP53 for proteasomal degradation, thus reducing TP53 levels in the cytoplasm and mitochondrion. Proposed to preferentially act as a SUMO E3 ligase at physiological concentrations. Plays a role in the control of mitochondrial morphology by promoting mitochondrial fragmentation, and influences mitochondrial localization. Likely to promote mitochondrial fission through negatively regulating the mitochondrial fusion proteins MFN1 and MFN2, acting in a pathway that is parallel to the PRKN/PINK1 regulatory pathway. May also be involved in the sumoylation of the membrane fission protein DNM1L. Inhibits cell growth. When overexpressed, activates JNK through MAP3K7/TAK1 and induces caspase-dependent apoptosis. Involved in the modulation of innate immune defense against viruses by inhibiting RIGI-dependent antiviral response. Can mediate RIGI sumoylation and disrupt its polyubiquitination. This Homo sapiens (Human) protein is Mitochondrial ubiquitin ligase activator of NFKB 1 (MUL1).